The chain runs to 290 residues: 4-diphosphocytidyl-2-C-methyl-D-erythritol kinase (290 aa).

K10 is an active-site residue. 95–105 contacts ATP; sequence PVAAGLAGGSS. Residue D137 is part of the active site.

This sequence belongs to the GHMP kinase family. IspE subfamily.

It carries out the reaction 4-CDP-2-C-methyl-D-erythritol + ATP = 4-CDP-2-C-methyl-D-erythritol 2-phosphate + ADP + H(+). The protein operates within isoprenoid biosynthesis; isopentenyl diphosphate biosynthesis via DXP pathway; isopentenyl diphosphate from 1-deoxy-D-xylulose 5-phosphate: step 3/6. Functionally, catalyzes the phosphorylation of the position 2 hydroxy group of 4-diphosphocytidyl-2C-methyl-D-erythritol. The sequence is that of 4-diphosphocytidyl-2-C-methyl-D-erythritol kinase from Geobacillus thermodenitrificans (strain NG80-2).